A 430-amino-acid chain; its full sequence is Oleandomycin glycosyltransferase (430 aa).

Positions Gly-385–Leu-430 are disordered. Over residues Gly-386 to Gly-409 the composition is skewed to basic and acidic residues.

The protein belongs to the UDP-glycosyltransferase family.

Specifically inactivates oleandomycin via 2'-O-glycosylation using UDP-glucose. In Streptomyces antibioticus, this protein is Oleandomycin glycosyltransferase (oleD).